Reading from the N-terminus, the 318-residue chain is Ubiquinol oxidase, mitochondrial (318 aa).

The N-terminal 46 residues, 1–46 (MTVMRGLLNGGRYGNRYIWTAISLRHPEVMEGNGLESAVMQWRRML), are a transit peptide targeting the mitochondrion. The chain crosses the membrane as a helical span at residues 143-163 (AMMLETVAAVPGMVGGMLLHL). Glu-147, Glu-186, and His-189 together coordinate Fe cation. The chain crosses the membrane as a helical span at residues 205-225 (LLVLAVQGVFFNSFFVLYVLS). 3 residues coordinate Fe cation: Glu-237, Glu-288, and His-291.

This sequence belongs to the alternative oxidase family. In terms of assembly, homodimer; disulfide-linked. Fe cation serves as cofactor.

Its subcellular location is the mitochondrion inner membrane. It carries out the reaction 2 a ubiquinol + O2 = 2 a ubiquinone + 2 H2O. Functionally, catalyzes the cyanide-resistant oxidation of ubiquinol and the reduction of molecular oxygen to water, but does not translocate protons and consequently is not linked to oxidative phosphorylation. May increase respiration when the cytochrome respiratory pathway is restricted, or in response to low temperatures. This is Ubiquinol oxidase, mitochondrial (AOMI 1) from Mangifera indica (Mango).